The sequence spans 226 residues: Lipoprotein-releasing system ATP-binding protein LolD (226 aa).

Residues 6–226 (VLISGLTKTF…KLYKGNLEEV (221 aa)) form the ABC transporter domain. 42-49 (GESGSGKS) lines the ATP pocket.

The protein belongs to the ABC transporter superfamily. Lipoprotein translocase (TC 3.A.1.125) family. The complex is composed of two ATP-binding proteins (LolD) and two transmembrane proteins (LolC and LolE).

It is found in the cell inner membrane. Part of the ABC transporter complex LolCDE involved in the translocation of mature outer membrane-directed lipoproteins, from the inner membrane to the periplasmic chaperone, LolA. Responsible for the formation of the LolA-lipoprotein complex in an ATP-dependent manner. The sequence is that of Lipoprotein-releasing system ATP-binding protein LolD from Treponema denticola (strain ATCC 35405 / DSM 14222 / CIP 103919 / JCM 8153 / KCTC 15104).